Reading from the N-terminus, the 276-residue chain is Eukaryotic translation initiation factor 3 subunit G-2 (276 aa).

In terms of domain architecture, RRM spans 196-274 (SAVRISNLSE…LILCVEWSKP (79 aa)).

It belongs to the eIF-3 subunit G family. Component of the eukaryotic translation initiation factor 3 (eIF-3) complex. The eIF-3 complex interacts with pix.

The protein localises to the cytoplasm. Functionally, RNA-binding component of the eukaryotic translation initiation factor 3 (eIF-3) complex, which is involved in protein synthesis of a specialized repertoire of mRNAs and, together with other initiation factors, stimulates binding of mRNA and methionyl-tRNAi to the 40S ribosome. The eIF-3 complex specifically targets and initiates translation of a subset of mRNAs involved in cell proliferation. This subunit can bind 18S rRNA. In Drosophila persimilis (Fruit fly), this protein is Eukaryotic translation initiation factor 3 subunit G-2.